The following is a 145-amino-acid chain: uncharacterized protein (145 aa).

One can recognise a CBM3 domain in the interval Leu1–Pro145.

This is an uncharacterized protein from Paenibacillus lautus (Bacillus lautus).